The chain runs to 102 residues: DET1- and DDB1-associated protein 1 (102 aa).

An N-acetylalanine modification is found at Ala-2. Phosphoserine occurs at positions 33 and 95. The tract at residues 67 to 102 is disordered; it reads NAAKKRDQEQVEAEGESSAPPRKVARTDSPDMPEDT.

It belongs to the DDA1 family. As to quaternary structure, component of numerous DCX (DDB1-CUL4-X-box) E3 ubiquitin-protein ligase complexes which consist of a core of DDB1, cullin-4 (CUL4A or CUL4B), DDA1 and RBX1. Component of the DCX(DCAF15) complex, also named CLR4(DCAF15) complex, composed of DCAF15, DDB1, cullin-4 (CUL4A or CUL4B), DDA1 and RBX1. Part of the DDD core complex containing DET1, DDA1 and DDB1; the DDD core complex recruits a specific UBE2E enzyme, such as UBE2E1, UBE2E2 UBE2E3, to form specific DDD-E2 complexes.

It functions in the pathway protein modification; protein ubiquitination. Functions as a component of numerous distinct DCX (DDB1-CUL4-X-box) E3 ubiquitin-protein ligase complexes which mediate the ubiquitination and subsequent proteasomal degradation of target proteins. In the DCX complexes, acts as a scaffolding subunit required to stabilize the complex. The polypeptide is DET1- and DDB1-associated protein 1 (Mus musculus (Mouse)).